Consider the following 324-residue polypeptide: Olfactory receptor 52N5 (324 aa).

Residues 1–33 (MPLFNSLCWFPTIHVTPPSFILNGIPGLERVHV) are Extracellular-facing. The helical transmembrane segment at 34 to 54 (WISLPLCTMYIIFLVGNLGLV) threads the bilayer. At 55 to 62 (YLIYYEES) the chain is on the cytoplasmic side. The helical transmembrane segment at 63–84 (LHHPMYFFFGHALSLIDLLTCT) threads the bilayer. Topologically, residues 85-108 (TTLPNALCIFWFSLKEINFNACLA) are extracellular. Cys-106 and Cys-198 are disulfide-bonded. Residues 109 to 129 (QMFFVHGFTGVESGVLMLMAL) traverse the membrane as a helical segment. Residues 130–148 (DRYVAICYPLRYATTLTNP) lie on the Cytoplasmic side of the membrane. Residues 149-169 (IIAKAELATFLRGVLLMIPFP) traverse the membrane as a helical segment. Over 170 to 205 (FLVKRLPFCQSNIISHTYCDHMSVVKLSCASIKVNV) the chain is Extracellular. The helical transmembrane segment at 206–226 (IYGLMVALLIGVFDICCISLS) threads the bilayer. The Cytoplasmic portion of the chain corresponds to 227–246 (YTLILKAAISLSSSDARQKA). Residues 247–267 (FSTCTAHISAIIITYVPAFFT) traverse the membrane as a helical segment. Residues 268–283 (FFAHRFGGHTIPPSLH) lie on the Extracellular side of the membrane. Residues 284-304 (IIVANLYLLLPPTLNPIVYGV) form a helical membrane-spanning segment. Topologically, residues 305-324 (KTKQIRKSVIKFFQGDKGAG) are cytoplasmic.

The protein belongs to the G-protein coupled receptor 1 family.

Its subcellular location is the cell membrane. Functionally, odorant receptor. This Homo sapiens (Human) protein is Olfactory receptor 52N5 (OR52N5).